The sequence spans 399 residues: DNA polymerase IV (399 aa).

The UmuC domain occupies 5-187; it reads ILHCDLNNFY…LPVEALLYVG (183 aa). Asp9 and Asp105 together coordinate Mg(2+). Glu106 is an active-site residue.

This sequence belongs to the DNA polymerase type-Y family. As to quaternary structure, monomer. Requires Mg(2+) as cofactor.

It localises to the cytoplasm. It carries out the reaction DNA(n) + a 2'-deoxyribonucleoside 5'-triphosphate = DNA(n+1) + diphosphate. Poorly processive, error-prone DNA polymerase involved in untargeted mutagenesis. Copies undamaged DNA at stalled replication forks, which arise in vivo from mismatched or misaligned primer ends. These misaligned primers can be extended by PolIV. Exhibits no 3'-5' exonuclease (proofreading) activity. May be involved in translesional synthesis, in conjunction with the beta clamp from PolIII. This Acetivibrio thermocellus (strain ATCC 27405 / DSM 1237 / JCM 9322 / NBRC 103400 / NCIMB 10682 / NRRL B-4536 / VPI 7372) (Clostridium thermocellum) protein is DNA polymerase IV.